We begin with the raw amino-acid sequence, 299 residues long: Troponin T, cardiac muscle (299 aa).

The span at 1–71 (MSDAEEEVVE…EARDAEDGPV (71 aa)) shows a compositional bias: acidic residues. Disordered stretches follow at residues 1-97 (MSDA…GERV) and 137-220 (DRIE…EKKK). Ser2 is subject to N-acetylserine. Ser2 is modified (phosphoserine). Composition is skewed to basic and acidic residues over residues 137-185 (DRIE…DEAR) and 204-220 (QTERKSGKRQTEREKKK). Position 205 is a phosphothreonine; by PKC/PRKCA (Thr205). Ser209 carries the phosphoserine; by PKC/PRKCA modification. The residue at position 214 (Thr214) is a Phosphothreonine; by PKC/PRKCA and RAF1. Position 295 is a phosphothreonine; by PKC/PRKCA (Thr295).

It belongs to the troponin T family. Phosphorylation at Thr-214 by PRKCA induces significant reduction in myofilament calcium sensitivity and actomyosin ATPase activity.

Troponin T is the tropomyosin-binding subunit of troponin, the thin filament regulatory complex which confers calcium-sensitivity to striated muscle actomyosin ATPase activity. The polypeptide is Troponin T, cardiac muscle (Tnnt2) (Rattus norvegicus (Rat)).